The chain runs to 93 residues: Putative septation protein SpoVG (93 aa).

This sequence belongs to the SpoVG family.

Functionally, could be involved in septation. This is Putative septation protein SpoVG from Fusobacterium nucleatum subsp. nucleatum (strain ATCC 25586 / DSM 15643 / BCRC 10681 / CIP 101130 / JCM 8532 / KCTC 2640 / LMG 13131 / VPI 4355).